The following is a 752-amino-acid chain: Myb-related protein A (752 aa).

The disordered stretch occupies residues 1–22 (MAKRSRSEDEDDDLQYADHDYE). 3 consecutive HTH myb-type domains span residues 30–81 (KKLW…QKVL), 82–137 (NPEL…NPEV), and 138–188 (KKSS…RRKV). 3 consecutive DNA-binding regions (H-T-H motif) follow at residues 58-81 (WTLI…QKVL), 110-133 (WSLI…HNHL), and 161-184 (WAEI…NSTM). A Glycyl lysine isopeptide (Lys-Gly) (interchain with G-Cter in SUMO2) cross-link involves residue Lys-199. Residues 230 to 295 (IPGYQYVSPE…RIPSQPGSFS (66 aa)) are transcriptional activation domain. Residues 298 to 553 (SGSFLMDDNM…IRRSILGTTP (256 aa)) are negative regulatory domain. The residue at position 394 (Lys-394) is an N6-acetyllysine. The interval 451-480 (RKMRVGHSPGSELRDGSLNDGGNMALKHTP) is disordered. Glycyl lysine isopeptide (Lys-Gly) (interchain with G-Cter in SUMO2) cross-links involve residues Lys-592 and Lys-602.

Component of the DREAM complex (also named LINC complex) at least composed of E2F4, E2F5, LIN9, LIN37, LIN52, LIN54, MYBL1, MYBL2, RBL1, RBL2, RBBP4, TFDP1 and TFDP2. The complex exists in quiescent cells where it represses cell cycle-dependent genes. It dissociates in S phase when LIN9, LIN37, LIN52 and LIN54 form a subcomplex that binds to MYBL2. Expressed in a variety of lymphoid and solid tumor lines cultured in vitro.

It is found in the nucleus. Transcription factor that specifically recognizes the sequence 5'-YAAC[GT]G-3'. Acts as a master regulator of male meiosis by promoting expression of piRNAs: activates expression of both piRNA precursor RNAs and expression of protein-coding genes involved in piRNA metabolism. The piRNA metabolic process mediates the repression of transposable elements during meiosis by forming complexes composed of piRNAs and Piwi proteins and governs the methylation and subsequent repression of transposons, which is essential for the germline integrity. Transcriptional activator of SOX30. The sequence is that of Myb-related protein A (MYBL1) from Homo sapiens (Human).